A 261-amino-acid polypeptide reads, in one-letter code: Cytochrome c oxidase subunit 3 (261 aa).

Residues 1–15 (MTHQTHAYHMVNPSP) are Mitochondrial matrix-facing. A helical transmembrane segment spans residues 16 to 34 (WPLTGALSALLMTFGLIMW). At 35-40 (FHFNST) the chain is on the mitochondrial intermembrane side. The helical transmembrane segment at 41-66 (ALLMLGLTTNMLTMYQWWRDIIREST) threads the bilayer. The Mitochondrial matrix portion of the chain corresponds to 67-72 (FQGHHT). A helical transmembrane segment spans residues 73–105 (PVVQKGLRYGMILFIISEVLFFTGFFWAFYHSS). Over 106-128 (LAPTPELGGCWPPTGIHPLNPLE) the chain is Mitochondrial intermembrane. The chain crosses the membrane as a helical span at residues 129–152 (VPLLNTSVLLASGVSITWAHHSLM). Residues 153–155 (EGH) are Mitochondrial matrix-facing. Residues 156–183 (RNHMLQALFITIALGVYFTLLQASEYYE) traverse the membrane as a helical segment. Topologically, residues 184-190 (APFTISD) are mitochondrial intermembrane. Residues 191–223 (GVYGSTFFVATGFHGLHVIIGSTFLIVCFFRQL) traverse the membrane as a helical segment. At 224-232 (KFHFTSSHH) the chain is on the mitochondrial matrix side. A helical transmembrane segment spans residues 233–256 (FGFEAAAWYWHFVDVVWLFLYVSI). Residues 257–261 (YWWGS) are Mitochondrial intermembrane-facing.

This sequence belongs to the cytochrome c oxidase subunit 3 family. In terms of assembly, component of the cytochrome c oxidase (complex IV, CIV), a multisubunit enzyme composed of 14 subunits. The complex is composed of a catalytic core of 3 subunits MT-CO1, MT-CO2 and MT-CO3, encoded in the mitochondrial DNA, and 11 supernumerary subunits COX4I, COX5A, COX5B, COX6A, COX6B, COX6C, COX7A, COX7B, COX7C, COX8 and NDUFA4, which are encoded in the nuclear genome. The complex exists as a monomer or a dimer and forms supercomplexes (SCs) in the inner mitochondrial membrane with NADH-ubiquinone oxidoreductase (complex I, CI) and ubiquinol-cytochrome c oxidoreductase (cytochrome b-c1 complex, complex III, CIII), resulting in different assemblies (supercomplex SCI(1)III(2)IV(1) and megacomplex MCI(2)III(2)IV(2)).

The protein resides in the mitochondrion inner membrane. It carries out the reaction 4 Fe(II)-[cytochrome c] + O2 + 8 H(+)(in) = 4 Fe(III)-[cytochrome c] + 2 H2O + 4 H(+)(out). Functionally, component of the cytochrome c oxidase, the last enzyme in the mitochondrial electron transport chain which drives oxidative phosphorylation. The respiratory chain contains 3 multisubunit complexes succinate dehydrogenase (complex II, CII), ubiquinol-cytochrome c oxidoreductase (cytochrome b-c1 complex, complex III, CIII) and cytochrome c oxidase (complex IV, CIV), that cooperate to transfer electrons derived from NADH and succinate to molecular oxygen, creating an electrochemical gradient over the inner membrane that drives transmembrane transport and the ATP synthase. Cytochrome c oxidase is the component of the respiratory chain that catalyzes the reduction of oxygen to water. Electrons originating from reduced cytochrome c in the intermembrane space (IMS) are transferred via the dinuclear copper A center (CU(A)) of subunit 2 and heme A of subunit 1 to the active site in subunit 1, a binuclear center (BNC) formed by heme A3 and copper B (CU(B)). The BNC reduces molecular oxygen to 2 water molecules using 4 electrons from cytochrome c in the IMS and 4 protons from the mitochondrial matrix. The sequence is that of Cytochrome c oxidase subunit 3 (MT-CO3) from Tragelaphus oryx (Eland).